The primary structure comprises 146 residues: Hemoglobin subunit beta-S/F (146 aa).

An N-acetylvaline modification is found at Val1. A Globin domain is found at 2–146; the sequence is HLTDGEKNAI…VANALSHKYH (145 aa). The residue at position 44 (Ser44) is a Phosphoserine. Residue Lys59 is modified to N6-acetyllysine. A heme b-binding site is contributed by His63. The residue at position 82 (Lys82) is an N6-acetyllysine. Residue His92 participates in heme b binding. At Cys93 the chain carries S-nitrosocysteine. Lys144 carries the post-translational modification N6-acetyllysine.

This sequence belongs to the globin family. Heterotetramer of two alpha chains and two beta chains. Red blood cells.

In terms of biological role, involved in oxygen transport from the lung to the various peripheral tissues. This Urocitellus townsendii (Townsend's ground squirrel) protein is Hemoglobin subunit beta-S/F.